Here is a 440-residue protein sequence, read N- to C-terminus: Glucose-1-phosphate adenylyltransferase (440 aa).

Residues tyrosine 125, glycine 190, 205–206 (EK), and serine 223 contribute to the alpha-D-glucose 1-phosphate site.

This sequence belongs to the bacterial/plant glucose-1-phosphate adenylyltransferase family. As to quaternary structure, homotetramer.

The catalysed reaction is alpha-D-glucose 1-phosphate + ATP + H(+) = ADP-alpha-D-glucose + diphosphate. It functions in the pathway glycan biosynthesis; glycogen biosynthesis. Its function is as follows. Involved in the biosynthesis of ADP-glucose, a building block required for the elongation reactions to produce glycogen. Catalyzes the reaction between ATP and alpha-D-glucose 1-phosphate (G1P) to produce pyrophosphate and ADP-Glc. This Dechloromonas aromatica (strain RCB) protein is Glucose-1-phosphate adenylyltransferase.